Reading from the N-terminus, the 402-residue chain is Probable tRNA sulfurtransferase (402 aa).

The 106-residue stretch at 61 to 166 folds into the THUMP domain; the sequence is EEIMKRISKV…SDAAYLYSRV (106 aa). Residues 184–185, 209–210, Arg266, Gly288, and Gln297 contribute to the ATP site; these read ML and HF.

This sequence belongs to the ThiI family.

Its subcellular location is the cytoplasm. It catalyses the reaction [ThiI sulfur-carrier protein]-S-sulfanyl-L-cysteine + a uridine in tRNA + 2 reduced [2Fe-2S]-[ferredoxin] + ATP + H(+) = [ThiI sulfur-carrier protein]-L-cysteine + a 4-thiouridine in tRNA + 2 oxidized [2Fe-2S]-[ferredoxin] + AMP + diphosphate. It carries out the reaction [ThiS sulfur-carrier protein]-C-terminal Gly-Gly-AMP + S-sulfanyl-L-cysteinyl-[cysteine desulfurase] + AH2 = [ThiS sulfur-carrier protein]-C-terminal-Gly-aminoethanethioate + L-cysteinyl-[cysteine desulfurase] + A + AMP + 2 H(+). It participates in cofactor biosynthesis; thiamine diphosphate biosynthesis. In terms of biological role, catalyzes the ATP-dependent transfer of a sulfur to tRNA to produce 4-thiouridine in position 8 of tRNAs, which functions as a near-UV photosensor. Also catalyzes the transfer of sulfur to the sulfur carrier protein ThiS, forming ThiS-thiocarboxylate. This is a step in the synthesis of thiazole, in the thiamine biosynthesis pathway. The sulfur is donated as persulfide by IscS. This chain is Probable tRNA sulfurtransferase, found in Macrococcus caseolyticus (strain JCSC5402) (Macrococcoides caseolyticum).